The primary structure comprises 1483 residues: Heme-responsive zinc finger transcription factor HAP1 (1483 aa).

Residues 1 to 50 (MSNTPYNSSVPSIASMTQSSVSRSPNMHTATTPGANTSSNSPPLHMSSDS) are compositionally biased toward polar residues. Residues 1-56 (MSNTPYNSSVPSIASMTQSSVSRSPNMHTATTPGANTSSNSPPLHMSSDSSKIKRK) form a disordered region. Residues C64, C67, C74, C81, C84, and C93 each contribute to the Zn(2+) site. Residues 64–93 (CTICRKRKVKCDKLRPHCQQCTKTGVAHLC) constitute a DNA-binding region (zn(2)-C6 fungal-type). Residues 105–134 (EKELLKDNELKKLRERVKSLEKTLSKVHSS) are a coiled coil. Over residues 162–176 (VNANTGSASSASHMH) the composition is skewed to polar residues. The interval 162–208 (VNANTGSASSASHMHQQQQQQQQQEQQQDFSRSANANANSSSLSISN) is disordered. Positions 177–208 (QQQQQQQQQEQQQDFSRSANANANSSSLSISN) are enriched in low complexity. The segment at 244–444 (KGDPYLKLLW…NTIPHHQPQS (201 aa)) is heme-responsive; required for HMC formation. HRM repeat units follow at residues 280–285 (KCPINH), 299–304 (KCPVDH), 323–328 (KCPVDH), 347–352 (RCPVDH), 389–394 (KCPVDH), and 415–420 (RCPIDH). Polar residues-rich tracts occupy residues 432-447 (STHN…SGSH) and 706-734 (QLNA…NPTL). 2 disordered regions span residues 432–458 (STHN…NRKH) and 706–767 (QLNA…KENQ). Positions 735–759 (NNNMSAATTNSSSRSGSADSRSGSN) are enriched in low complexity. One copy of the HRM 7 repeat lies at 1192 to 1197 (KCPVYQ). The segment at 1384–1411 (TANTDTSANGSALSTLTSPQGSDLASNS) is disordered. Positions 1388 to 1411 (DTSANGSALSTLTSPQGSDLASNS) are enriched in polar residues.

As to quaternary structure, binds DNA as a homodimer. Interacts with SRO9 and YDJ1. In the absence of heme, binds to at least four cellular proteins, including YDJ1 and SRO9, forming a high-molecular-weight complex (HMC) which results in repression of its activity and dictates its DNA-binding specificity.

Its subcellular location is the nucleus. In terms of biological role, regulation of oxygen dependent gene expression. It modulates the expression of Iso-1 (CYP1) and Iso-2 (CYP3) cytochrome c. In response to heme, promotes transcription of genes encoding functions required for respiration, controlling oxidative damage and repression of anaerobic genes. Binds to the sequence 5'-CGGNNNTNNCGG-3'. The polypeptide is Heme-responsive zinc finger transcription factor HAP1 (HAP1) (Saccharomyces cerevisiae (strain RM11-1a) (Baker's yeast)).